Reading from the N-terminus, the 156-residue chain is Ribonuclease P protein component (156 aa).

Residues Gly-126–Ser-156 form a disordered region.

The protein belongs to the RnpA family. Consists of a catalytic RNA component (M1 or rnpB) and a protein subunit.

The enzyme catalyses Endonucleolytic cleavage of RNA, removing 5'-extranucleotides from tRNA precursor.. In terms of biological role, RNaseP catalyzes the removal of the 5'-leader sequence from pre-tRNA to produce the mature 5'-terminus. It can also cleave other RNA substrates such as 4.5S RNA. The protein component plays an auxiliary but essential role in vivo by binding to the 5'-leader sequence and broadening the substrate specificity of the ribozyme. In Nocardia farcinica (strain IFM 10152), this protein is Ribonuclease P protein component.